The sequence spans 224 residues: PKHD-type hydroxylase CYB_2270 (224 aa).

In terms of domain architecture, Fe2OG dioxygenase spans 78-176 (LIHSILISCY…RYAAVSWVQS (99 aa)). Fe cation contacts are provided by His96, Asp98, and His157. Arg167 contacts 2-oxoglutarate.

The cofactor is Fe(2+). Requires L-ascorbate as cofactor.

This is PKHD-type hydroxylase CYB_2270 from Synechococcus sp. (strain JA-2-3B'a(2-13)) (Cyanobacteria bacterium Yellowstone B-Prime).